Here is a 346-residue protein sequence, read N- to C-terminus: Holliday junction branch migration complex subunit RuvB (346 aa).

A large ATPase domain (RuvB-L) region spans residues 2–183 (TDDRIIGAGA…FGIVQRLEFY (182 aa)). Residues Ile22, Arg23, Gly64, Lys67, Thr68, Thr69, 130–132 (EDF), Arg173, Tyr183, and Arg220 contribute to the ATP site. Thr68 provides a ligand contact to Mg(2+). Positions 184-254 (SVEELTRIVR…VAQAAMKMLK (71 aa)) are small ATPAse domain (RuvB-S). Positions 257-346 (PEGFDELDRR…DLFAEVPDVG (90 aa)) are head domain (RuvB-H). Arg293, Arg312, and Arg317 together coordinate DNA.

This sequence belongs to the RuvB family. Homohexamer. Forms an RuvA(8)-RuvB(12)-Holliday junction (HJ) complex. HJ DNA is sandwiched between 2 RuvA tetramers; dsDNA enters through RuvA and exits via RuvB. An RuvB hexamer assembles on each DNA strand where it exits the tetramer. Each RuvB hexamer is contacted by two RuvA subunits (via domain III) on 2 adjacent RuvB subunits; this complex drives branch migration. In the full resolvosome a probable DNA-RuvA(4)-RuvB(12)-RuvC(2) complex forms which resolves the HJ.

It is found in the cytoplasm. The catalysed reaction is ATP + H2O = ADP + phosphate + H(+). In terms of biological role, the RuvA-RuvB-RuvC complex processes Holliday junction (HJ) DNA during genetic recombination and DNA repair, while the RuvA-RuvB complex plays an important role in the rescue of blocked DNA replication forks via replication fork reversal (RFR). RuvA specifically binds to HJ cruciform DNA, conferring on it an open structure. The RuvB hexamer acts as an ATP-dependent pump, pulling dsDNA into and through the RuvAB complex. RuvB forms 2 homohexamers on either side of HJ DNA bound by 1 or 2 RuvA tetramers; 4 subunits per hexamer contact DNA at a time. Coordinated motions by a converter formed by DNA-disengaged RuvB subunits stimulates ATP hydrolysis and nucleotide exchange. Immobilization of the converter enables RuvB to convert the ATP-contained energy into a lever motion, pulling 2 nucleotides of DNA out of the RuvA tetramer per ATP hydrolyzed, thus driving DNA branch migration. The RuvB motors rotate together with the DNA substrate, which together with the progressing nucleotide cycle form the mechanistic basis for DNA recombination by continuous HJ branch migration. Branch migration allows RuvC to scan DNA until it finds its consensus sequence, where it cleaves and resolves cruciform DNA. The protein is Holliday junction branch migration complex subunit RuvB of Stenotrophomonas maltophilia (strain K279a).